The sequence spans 998 residues: DNA damage-induced apoptosis suppressor protein (998 aa).

The disordered stretch occupies residues 815–834; it reads DKQQASPSCPKNIKTPSQKI. Residues 817–834 show a composition bias toward polar residues; sequence QQASPSCPKNIKTPSQKI.

Highly expressed in colorectal and lung cancer tissues.

The protein localises to the cytoplasm. It is found in the nucleus. Its function is as follows. May be an anti-apoptotic protein involved in DNA repair or cell survival. The protein is DNA damage-induced apoptosis suppressor protein (DDIAS) of Homo sapiens (Human).